Here is a 419-residue protein sequence, read N- to C-terminus: Peptide chain release factor subunit 1 (419 aa).

The protein belongs to the eukaryotic release factor 1 family. In terms of assembly, heterodimer of two subunits, one of which binds GTP.

It localises to the cytoplasm. Its function is as follows. Directs the termination of nascent peptide synthesis (translation) in response to the termination codons UAA, UAG and UGA. This Methanococcus maripaludis (strain DSM 14266 / JCM 13030 / NBRC 101832 / S2 / LL) protein is Peptide chain release factor subunit 1.